Consider the following 60-residue polypeptide: MTKKLLTYCKVKLVKGFSKKFASLFCRCVVSHLSDEDDSDGDRYYQYNNNCNFIYINIVK.

This is an uncharacterized protein from Lepidoptera (butterflies and moths).